We begin with the raw amino-acid sequence, 222 residues long: uncharacterized protein (222 aa).

The disordered stretch occupies residues 142–222; that stretch reads ARRGGCVHPP…LPDPPSAGHL (81 aa). The segment covering 160–169 has biased composition (low complexity); that stretch reads QSRSISSRRA. Residues 182-196 show a composition bias toward basic residues; sequence PRRRPHRHRTRPQTR.

Belongs to the Rv1128c/1148c/1588c/1702c/1945/3466 family.

This is an uncharacterized protein from Mycobacterium tuberculosis (strain CDC 1551 / Oshkosh).